The sequence spans 714 residues: RanBP-type and C3HC4-type zinc finger-containing protein 1 (714 aa).

Disordered stretches follow at residues M1–G23 and S152–P172. Residues P14–G23 are compositionally biased toward polar residues. Residues L225 to R301 form the Ubiquitin-like domain. A RanBP2-type zinc finger spans residues R394–E426. The tract at residues E482 to C710 is TRIAD supradomain. Positions 486, 489, 504, 506, 509, 512, 527, 536, 575, 580, 595, 598, 603, 606, 610, 615, 651, and 654 each coordinate Zn(2+). The segment at C486–C536 adopts an RING-type 1 zinc-finger fold. The IBR-type zinc finger occupies Q555–C615. The segment at C651 to T680 adopts an RING-type 2; atypical zinc-finger fold. The active site involves C664. Zn(2+) contacts are provided by C669 and C672.

This sequence belongs to the RBR family. Component of the LUBAC complex (linear ubiquitin chain assembly complex).

The catalysed reaction is [E2 ubiquitin-conjugating enzyme]-S-ubiquitinyl-L-cysteine + [acceptor protein]-L-lysine = [E2 ubiquitin-conjugating enzyme]-L-cysteine + [acceptor protein]-N(6)-ubiquitinyl-L-lysine.. The protein operates within protein modification; protein ubiquitination. Functionally, component of the LUBAC complex which conjugates linear ('Met-1'-linked) polyubiquitin chains to substrates and plays a key role in NF-kappa-B activation and regulation of inflammation. LUBAC conjugates linear polyubiquitin to ikbkg and RIPK1 and is involved in activation of the canonical NF-kappa-B and the JNK signaling pathways. Linear ubiquitination mediated by the LUBAC complex interferes with TNF-induced cell death and thereby prevents inflammation. LUBAC is recruited to the TNF-R1 signaling complex (TNF-RSC) to conjugate linear polyubiquitin to ikbkg and possibly other components contributing to the stability of the complex. The LUBAC complex is also involved in innate immunity by conjugating linear polyubiquitin chains at the surface of bacteria invading the cytosol to form the ubiquitin coat surrounding bacteria. LUBAC is not able to initiate formation of the bacterial ubiquitin coat, and can only promote formation of linear polyubiquitins on pre-existing ubiquitin. The bacterial ubiquitin coat acts as an 'eat-me' signal for xenophagy and promotes NF-kappa-B activation. Binds polyubiquitin of different linkage types. In Danio rerio (Zebrafish), this protein is RanBP-type and C3HC4-type zinc finger-containing protein 1 (rbck1).